Reading from the N-terminus, the 222-residue chain is Cyclin-U2-1 (222 aa).

It belongs to the cyclin family. Cyclin U/P subfamily. In terms of assembly, interacts with CDKA-1. Expressed in roots, stems and flowers. Expressed in the shoot apex, leaf primordia and young leaves.

This Arabidopsis thaliana (Mouse-ear cress) protein is Cyclin-U2-1 (CYCU2-1).